Reading from the N-terminus, the 1437-residue chain is Histone-lysine N-methyltransferase NSD3 (1437 aa).

Disordered regions lie at residues 121-157 (PHEI…KLKI) and 181-252 (QASE…PVQP). Positions 128–139 (PSPPQPPPPPSV) are enriched in pro residues. The residue at position 150 (S150) is a Phosphoserine. The KIKL motif lies at 154–157 (KLKI). The span at 187–201 (KSKHESRKEKRKKSN) shows a compositional bias: basic residues. Residues 202–248 (KHDSSRSEERKSHKIPKLEPEEQNRPNERVDTVSEKPREEPVLKEEA) show a composition bias toward basic and acidic residues. Residues K218 and K245 each participate in a glycyl lysine isopeptide (Lys-Gly) (interchain with G-Cter in SUMO2) cross-link. Positions 270 to 333 (VGDLVWSKVG…EKRVREYKGH (64 aa)) constitute a PWWP 1 domain. Disordered regions lie at residues 344-365 (TKQA…QRER) and 406-465 (AKKS…EPPP). A Glycyl lysine isopeptide (Lys-Gly) (interchain with G-Cter in SUMO2) cross-link involves residue K413. Positions 425 to 445 (VLNTQPEQTNAGEVASSLSST) are enriched in polar residues. Residue S457 is modified to Phosphoserine. Residues K502 and K532 each participate in a glycyl lysine isopeptide (Lys-Gly) (interchain with G-Cter in SUMO2) cross-link. The disordered stretch occupies residues 540–696 (QDRLIISTPN…DSSLSRRGTG (157 aa)). Over residues 546-571 (STPNQRNEKPTQSVSSPEATSGSTGS) the composition is skewed to polar residues. The span at 583 to 595 (TRSESEKSTEVVP) shows a compositional bias: basic and acidic residues. Residues S585, S587, and S590 each carry the phosphoserine modification. A Glycyl lysine isopeptide (Lys-Gly) (interchain with G-Cter in SUMO2) cross-link involves residue K628. At S655 the chain carries Phosphoserine. Over residues 682-692 (DVQSMDSSLSR) the composition is skewed to polar residues. 3 consecutive PHD-type zinc fingers follow at residues 701-748 (DTVC…CKTG), 749-805 (QHPC…CSME), and 862-955 (VGFC…CKAG). K790 carries the post-translational modification N6-acetyllysine. The PWWP 2 domain occupies 960 to 1022 (YKQIVWVKLG…QGRVFPYVEG (63 aa)). Positions 1033-1069 (INKTFKKALEEAAKRFQELKAQRESKEALEIEKNSRK) form a coiled coil. Positions 1093–1143 (SEIPRCNCKPADENPCGLESECLNRMLQYECHPQVCPAGDRCQNQCFTKRL) constitute an AWS domain. Residues 1145 to 1262 (PDAEIIKTER…AGMELTFNYN (118 aa)) enclose the SET domain. A Glycyl lysine isopeptide (Lys-Gly) (interchain with G-Cter in SUMO2) cross-link involves residue K1151. A Post-SET domain is found at 1269–1285 (GRTECHCGADNCSGFLG). The segment at 1321–1368 (EDYCFQCGDGGELVMCDKKDCPKAYHLLCLNLTQPPYGKWECPWHQCD) adopts a PHD-type 4; atypical zinc-finger fold.

This sequence belongs to the class V-like SAM-binding methyltransferase superfamily. Histone-lysine methyltransferase family. SET2 subfamily. In terms of assembly, interacts with BRD4. Interacts (via KIKL motif) with BRD3 (via NET domain). Highly expressed in brain, heart and skeletal muscle. Expressed at lower level in liver and lung.

The protein resides in the nucleus. Its subcellular location is the chromosome. It carries out the reaction L-lysyl(4)-[histone H3] + 2 S-adenosyl-L-methionine = N(6),N(6)-dimethyl-L-lysyl(4)-[histone H3] + 2 S-adenosyl-L-homocysteine + 2 H(+). The catalysed reaction is L-lysyl(27)-[histone H3] + 2 S-adenosyl-L-methionine = N(6),N(6)-dimethyl-L-lysyl(27)-[histone H3] + 2 S-adenosyl-L-homocysteine + 2 H(+). Its function is as follows. Histone methyltransferase. Preferentially dimethylates 'Lys-4' and 'Lys-27' of histone H3 forming H3K4me2 and H3K27me2. H3 'Lys-4' methylation represents a specific tag for epigenetic transcriptional activation, while 'Lys-27' is a mark for transcriptional repression. In Homo sapiens (Human), this protein is Histone-lysine N-methyltransferase NSD3.